The chain runs to 1055 residues: Ephrin type-B receptor 2 (1055 aa).

The signal sequence occupies residues 1–18 (MALRRLGAALLLLPLLAA). The Extracellular segment spans residues 19–543 (VEETLMDSTT…QTSIQEKLPL (525 aa)). The Eph LBD domain maps to 20–202 (EETLMDSTTA…FYRKCPRIIQ (183 aa)). Intrachain disulfides connect Cys62/Cys184 and Cys97/Cys107. 4 N-linked (GlcNAc...) asparagine glycosylation sites follow: Asn265, Asn336, Asn428, and Asn482. 2 consecutive Fibronectin type-III domains span residues 324–434 (IPSA…TNQA) and 435–530 (APSA…TMTE). A helical transmembrane segment spans residues 544–564 (IIGSSAAGLVFLIAVVVIAIV). At 565–1055 (CNRRGFERAD…KESNDCSCGG (491 aa)) the chain is on the cytoplasmic side. The Protein kinase domain maps to 621 to 884 (VKIEQVIGAG…QIVNTLDKMI (264 aa)). Residues 627-635 (IGAGEFGEV) and Lys653 each bind ATP. Asp746 functions as the Proton acceptor in the catalytic mechanism. Lys891 participates in a covalent cross-link: Glycyl lysine isopeptide (Lys-Gly) (interchain with G-Cter in ubiquitin). The region spanning 913–977 (TSFNTVDEWL…LNSIQVMRAQ (65 aa)) is the SAM domain. Residues Ser983 and Val984 each carry the phosphoserine modification. The short motif at 984-986 (VEG) is the PDZ-binding (in isoform 2) element. The segment at 990-1055 (ARRPRATGRT…KESNDCSCGG (66 aa)) is disordered. Residues 991–1002 (RRPRATGRTKRC) are compositionally biased toward basic residues. Basic and acidic residues predominate over residues 1025–1049 (KKTDPGRGREIQGIFFKEDSHKESN).

The protein belongs to the protein kinase superfamily. Tyr protein kinase family. Ephrin receptor subfamily. As to quaternary structure, heterotetramer upon binding of the ligand. The heterotetramer is composed of an ephrin dimer and a receptor dimer. Interacts (via PDZ-binding motif) with GRIP1 and PICK1 (via PDZ domain). Interacts with ARHGEF15; mediates ARHGEF15 phosphorylation, ubiquitination and degradation by the proteasome. Interacts with AQP1; involved in endolymph production in the inner ear. Interacts with SPSB1 and SPSB4. The phosphorylated form interacts with RASA1 (via SH2 domain 1). Interacts with EFNA5. Interacts with SH2D3C. In terms of processing, autophosphorylated; ligand binding stimulates autophosphorylation on tyrosine residues. Polyubiquitinated; ligand binding stimulates ubiquitination. Ubiquitinated by RNF186 at Lys-891, mainly through 'Lys-27'-linked polyubiquitin chains. Ubiquitinated by CRL2(KLHDC2) E3 ligase complex. Post-translationally, ligand binding induces cleavage by matrix metalloproteinases (MMPs) such as MMP7/MMP9, producing an EphB2/N-terminal fragment (NTF) and a C-terminal long fragment (EphB2-LF). EphB2-LF is further cleaved by MMPs, producing EphB2/CTF1 which is further cleaved by the PS1/gamma-secretase producing EphB2/CTF2. In terms of tissue distribution, brain, heart, lung, kidney, placenta, pancreas, liver and skeletal muscle. Preferentially expressed in fetal brain.

The protein resides in the cell membrane. The protein localises to the cell projection. It is found in the axon. It localises to the dendrite. It catalyses the reaction L-tyrosyl-[protein] + ATP = O-phospho-L-tyrosyl-[protein] + ADP + H(+). Its function is as follows. Receptor tyrosine kinase which binds promiscuously transmembrane ephrin-B family ligands residing on adjacent cells, leading to contact-dependent bidirectional signaling into neighboring cells. The signaling pathway downstream of the receptor is referred to as forward signaling while the signaling pathway downstream of the ephrin ligand is referred to as reverse signaling. Functions in axon guidance during development. Involved in the guidance of commissural axons, that form a major interhemispheric connection between the 2 temporal lobes of the cerebral cortex. Also involved in guidance of contralateral inner ear efferent growth cones at the midline and of retinal ganglion cell axons to the optic disk. In addition to axon guidance, also regulates dendritic spines development and maturation and stimulates the formation of excitatory synapses. Upon activation by EFNB1, abolishes the ARHGEF15-mediated negative regulation on excitatory synapse formation. Controls other aspects of development including angiogenesis, palate development and in inner ear development through regulation of endolymph production. Forward and reverse signaling through the EFNB2/EPHB2 complex regulate movement and adhesion of cells that tubularize the urethra and septate the cloaca. May function as a tumor suppressor. May be involved in the regulation of platelet activation and blood coagulation. This chain is Ephrin type-B receptor 2 (EPHB2), found in Homo sapiens (Human).